A 75-amino-acid chain; its full sequence is ATP synthase subunit 9, mitochondrial (75 aa).

Helical transmembrane passes span 10-30 and 55-75; these read LVLG…GILF and FALV…VYFI.

The protein belongs to the ATPase C chain family. F-type ATPases have 2 components, CF(1) - the catalytic core - and CF(0) - the membrane proton channel. CF(1) has five subunits: alpha(3), beta(3), gamma(1), delta(1), epsilon(1). CF(0) has three main subunits: a, b and c.

The protein resides in the mitochondrion membrane. In terms of biological role, mitochondrial membrane ATP synthase (F(1)F(0) ATP synthase or Complex V) produces ATP from ADP in the presence of a proton gradient across the membrane which is generated by electron transport complexes of the respiratory chain. F-type ATPases consist of two structural domains, F(1) - containing the extramembraneous catalytic core and F(0) - containing the membrane proton channel, linked together by a central stalk and a peripheral stalk. During catalysis, ATP synthesis in the catalytic domain of F(1) is coupled via a rotary mechanism of the central stalk subunits to proton translocation. Part of the complex F(0) domain. A homomeric c-ring of probably 10 subunits is part of the complex rotary element. The polypeptide is ATP synthase subunit 9, mitochondrial (ATP9) (Paramecium tetraurelia).